The primary structure comprises 608 residues: Aspartate--tRNA(Asp/Asn) ligase (608 aa).

E175 contacts L-aspartate. The aspartate stretch occupies residues 199–202 (QLFK). Position 221 (R221) interacts with L-aspartate. Residues 221–223 (RDE) and Q230 each bind ATP. An L-aspartate-binding site is contributed by H453. Position 487 (E487) interacts with ATP. R494 serves as a coordination point for L-aspartate. Residue 539-542 (GWDR) coordinates ATP. Residues 566–608 (IDPLTDAPAAITPQQRKEAGIDAKPKPKAEAQAEAQAEESAEK) are disordered. Over residues 580-596 (QRKEAGIDAKPKPKAEA) the composition is skewed to basic and acidic residues.

This sequence belongs to the class-II aminoacyl-tRNA synthetase family. Type 1 subfamily. In terms of assembly, homodimer.

Its subcellular location is the cytoplasm. The catalysed reaction is tRNA(Asx) + L-aspartate + ATP = L-aspartyl-tRNA(Asx) + AMP + diphosphate. Its function is as follows. Aspartyl-tRNA synthetase with relaxed tRNA specificity since it is able to aspartylate not only its cognate tRNA(Asp) but also tRNA(Asn). Reaction proceeds in two steps: L-aspartate is first activated by ATP to form Asp-AMP and then transferred to the acceptor end of tRNA(Asp/Asn). The polypeptide is Aspartate--tRNA(Asp/Asn) ligase (Corynebacterium glutamicum (strain R)).